The chain runs to 211 residues: ATP phosphoribosyltransferase (211 aa).

This sequence belongs to the ATP phosphoribosyltransferase family. Short subfamily. Heteromultimer composed of HisG and HisZ subunits.

It localises to the cytoplasm. The catalysed reaction is 1-(5-phospho-beta-D-ribosyl)-ATP + diphosphate = 5-phospho-alpha-D-ribose 1-diphosphate + ATP. The protein operates within amino-acid biosynthesis; L-histidine biosynthesis; L-histidine from 5-phospho-alpha-D-ribose 1-diphosphate: step 1/9. In terms of biological role, catalyzes the condensation of ATP and 5-phosphoribose 1-diphosphate to form N'-(5'-phosphoribosyl)-ATP (PR-ATP). Has a crucial role in the pathway because the rate of histidine biosynthesis seems to be controlled primarily by regulation of HisG enzymatic activity. In Pseudomonas fluorescens (strain SBW25), this protein is ATP phosphoribosyltransferase.